A 243-amino-acid polypeptide reads, in one-letter code: Ice-binding protein K1-A (243 aa).

The first 20 residues, 1 to 20, serve as a signal peptide directing secretion; it reads MFSSTYLLAIIALAVSSVFA.

The protein belongs to the ice-binding protein family.

The protein localises to the secreted. In terms of biological role, binds to the surface of ice crystals. Inhibits growth of the ice crystals. Has antifreeze activity for survival under snow cover. Has high thermal hysteresis (TH) activity, which is the ability to lower the freezing point of an aqueous solution below its melting point, and thus the freezing of the cell fluid can be prevented protecting the organism from ice damage. The TH activity of this protein is 2.0 degrees Celsius at 0.11 mM. In Typhula ishikariensis (Gray snow mold fungus), this protein is Ice-binding protein K1-A.